A 563-amino-acid polypeptide reads, in one-letter code: Inositol-3-phosphate synthase 1-A (563 aa).

Belongs to the myo-inositol 1-phosphate synthase family. The cofactor is NAD(+).

It localises to the cytoplasm. The enzyme catalyses D-glucose 6-phosphate = 1D-myo-inositol 3-phosphate. It functions in the pathway polyol metabolism; myo-inositol biosynthesis; myo-inositol from D-glucose 6-phosphate: step 1/2. Functionally, key enzyme in myo-inositol biosynthesis pathway that catalyzes the conversion of glucose 6-phosphate to 1-myo-inositol 1-phosphate in a NAD-dependent manner. Rate-limiting enzyme in the synthesis of all inositol-containing compounds. The polypeptide is Inositol-3-phosphate synthase 1-A (isyna1-a) (Xenopus laevis (African clawed frog)).